The primary structure comprises 299 residues: Serine/threonine-protein kinase 1 (299 aa).

The 239-residue stretch at 39–277 folds into the Protein kinase domain; it reads IATKPMFEGG…FKGLVSHPWF (239 aa). Residues 45–53 and Lys-66 each bind ATP; that span reads FEGGRRNNV. Asp-153 functions as the Proton acceptor in the catalytic mechanism.

This sequence belongs to the protein kinase superfamily. Ser/Thr protein kinase family.

The protein localises to the virion. It localises to the host cytoplasm. It carries out the reaction L-seryl-[protein] + ATP = O-phospho-L-seryl-[protein] + ADP + H(+). The catalysed reaction is L-threonyl-[protein] + ATP = O-phospho-L-threonyl-[protein] + ADP + H(+). Functionally, essential for viral replication. It may mediate the virus progression through DNA replication. This is Serine/threonine-protein kinase 1 from African swine fever virus (isolate Pig/Kenya/KEN-50/1950) (ASFV).